The sequence spans 225 residues: UPF0758 protein Shew_3481 (225 aa).

The region spanning 102 to 224 is the MPN domain; sequence ILSDPDLTRD…IVSFAERGWI (123 aa). Zn(2+) is bound by residues His173, His175, and Asp186. The JAMM motif motif lies at 173–186; that stretch reads HNHPSGGAEPSHAD.

The protein belongs to the UPF0758 family.

The protein is UPF0758 protein Shew_3481 of Shewanella loihica (strain ATCC BAA-1088 / PV-4).